Here is a 443-residue protein sequence, read N- to C-terminus: Exodeoxyribonuclease 7 large subunit (443 aa).

This sequence belongs to the XseA family. In terms of assembly, heterooligomer composed of large and small subunits.

The protein resides in the cytoplasm. It carries out the reaction Exonucleolytic cleavage in either 5'- to 3'- or 3'- to 5'-direction to yield nucleoside 5'-phosphates.. In terms of biological role, bidirectionally degrades single-stranded DNA into large acid-insoluble oligonucleotides, which are then degraded further into small acid-soluble oligonucleotides. The chain is Exodeoxyribonuclease 7 large subunit from Stenotrophomonas maltophilia (strain R551-3).